The sequence spans 475 residues: 3-isopropylmalate dehydratase large subunit (475 aa).

The [4Fe-4S] cluster site is built by cysteine 349, cysteine 409, and cysteine 412.

This sequence belongs to the aconitase/IPM isomerase family. LeuC type 1 subfamily. As to quaternary structure, heterodimer of LeuC and LeuD. [4Fe-4S] cluster is required as a cofactor.

The enzyme catalyses (2R,3S)-3-isopropylmalate = (2S)-2-isopropylmalate. It functions in the pathway amino-acid biosynthesis; L-leucine biosynthesis; L-leucine from 3-methyl-2-oxobutanoate: step 2/4. Its function is as follows. Catalyzes the isomerization between 2-isopropylmalate and 3-isopropylmalate, via the formation of 2-isopropylmaleate. This chain is 3-isopropylmalate dehydratase large subunit, found in Cereibacter sphaeroides (strain ATCC 17029 / ATH 2.4.9) (Rhodobacter sphaeroides).